Reading from the N-terminus, the 376-residue chain is Phosphoserine aminotransferase (376 aa).

Arg-42 contacts L-glutamate. Pyridoxal 5'-phosphate-binding residues include Trp-104, Thr-163, Asp-188, and Gln-211. Position 212 is an N6-(pyridoxal phosphate)lysine (Lys-212). Position 253-254 (253-254) interacts with pyridoxal 5'-phosphate; that stretch reads NT.

Belongs to the class-V pyridoxal-phosphate-dependent aminotransferase family. SerC subfamily. As to quaternary structure, homodimer. Pyridoxal 5'-phosphate serves as cofactor.

It localises to the cytoplasm. It carries out the reaction O-phospho-L-serine + 2-oxoglutarate = 3-phosphooxypyruvate + L-glutamate. It catalyses the reaction 4-(phosphooxy)-L-threonine + 2-oxoglutarate = (R)-3-hydroxy-2-oxo-4-phosphooxybutanoate + L-glutamate. It participates in amino-acid biosynthesis; L-serine biosynthesis; L-serine from 3-phospho-D-glycerate: step 2/3. Its pathway is cofactor biosynthesis; pyridoxine 5'-phosphate biosynthesis; pyridoxine 5'-phosphate from D-erythrose 4-phosphate: step 3/5. Functionally, catalyzes the reversible conversion of 3-phosphohydroxypyruvate to phosphoserine and of 3-hydroxy-2-oxo-4-phosphonooxybutanoate to phosphohydroxythreonine. This Bordetella avium (strain 197N) protein is Phosphoserine aminotransferase.